Here is a 282-residue protein sequence, read N- to C-terminus: MSSYENHRALDGLTLGKSTDYRDNYDASLLQGVPRSLNRDPLGLTADNLPFHGADIWTLYELSWLNSHGLPQIAIGHVELDYTSVNLIESKSFKLYLNSFNQTRFDTWETVRQTLERDLRACAQGNVSVKLHRLDELEGLPVAHFHGACIDDQDISIDNYQFTASYLQHAVSGEKRVEETLVSHLLKSNCLITHQPDWGSIQIQYRGRKIDREKLLRYLVSFRHHNEFHEQCVERIFNDLLRFCQPETLSVYARYTRRGGLDINPWRSNTDFVPATGRLARQ.

88-90 (IES) is a substrate binding site. 90 to 91 (SK) is a binding site for NADPH. Residue Cys190 is the Thioimide intermediate of the active site. Catalysis depends on Asp197, which acts as the Proton donor. Position 229–230 (229–230 (HE)) interacts with substrate. Residue 258 to 259 (RG) participates in NADPH binding.

This sequence belongs to the GTP cyclohydrolase I family. QueF type 2 subfamily. As to quaternary structure, homodimer.

Its subcellular location is the cytoplasm. The catalysed reaction is 7-aminomethyl-7-carbaguanine + 2 NADP(+) = 7-cyano-7-deazaguanine + 2 NADPH + 3 H(+). It functions in the pathway tRNA modification; tRNA-queuosine biosynthesis. Its function is as follows. Catalyzes the NADPH-dependent reduction of 7-cyano-7-deazaguanine (preQ0) to 7-aminomethyl-7-deazaguanine (preQ1). The chain is NADPH-dependent 7-cyano-7-deazaguanine reductase from Salmonella arizonae (strain ATCC BAA-731 / CDC346-86 / RSK2980).